The sequence spans 496 residues: Coiled-coil domain-containing protein 77 (496 aa).

Residues 1 to 42 (MDFSPPHGLRGGRSPSLQDTTISSSHTQKNGGDSTPLPPINE) are disordered. The span at 15-33 (PSLQDTTISSSHTQKNGGD) shows a compositional bias: polar residues. Positions 51-113 (RELLEYYRKK…KALSDMQVYL (63 aa)) form a coiled coil. The interval 170–208 (QRTVQSGDPFDRKVQRSGRAGVKQVPLKAPGKQDRTKAA) is disordered. Positions 214–495 (QILLLQVEAL…IYGLENELRI (282 aa)) form a coiled coil.

This is Coiled-coil domain-containing protein 77 (ccdc77) from Xenopus laevis (African clawed frog).